Reading from the N-terminus, the 468-residue chain is Glutamate--tRNA ligase 2 (468 aa).

The 'HIGH' region signature appears at 9–19 (PSPTGFLHIGG). Residues 238–242 (KLSKR) carry the 'KMSKS' region motif. Lysine 241 is a binding site for ATP.

Belongs to the class-I aminoacyl-tRNA synthetase family. Glutamate--tRNA ligase type 1 subfamily. Monomer.

It is found in the cytoplasm. It catalyses the reaction tRNA(Glu) + L-glutamate + ATP = L-glutamyl-tRNA(Glu) + AMP + diphosphate. Functionally, catalyzes the attachment of glutamate to tRNA(Glu) in a two-step reaction: glutamate is first activated by ATP to form Glu-AMP and then transferred to the acceptor end of tRNA(Glu). This Rhodospirillum rubrum (strain ATCC 11170 / ATH 1.1.1 / DSM 467 / LMG 4362 / NCIMB 8255 / S1) protein is Glutamate--tRNA ligase 2.